Reading from the N-terminus, the 655-residue chain is p-hydroxybenzoic acid efflux pump subunit AaeB (655 aa).

11 consecutive transmembrane segments (helical) span residues 13 to 33, 38 to 58, 69 to 89, 93 to 113, 121 to 141, 152 to 172, 370 to 390, 407 to 427, 431 to 451, 459 to 479, and 482 to 502; these read FAVKLACAIVLALFIGFHFQL, WAVLTAAIVAAGPAFAAGGEP, LRIIGTFIGCIAALIIIISMI, LLMILVCCVWAGFCTWISSLV, WGLSGYTALIIVITIQTEPLL, EIVIGIGCAILADLLFSPRSI, LFWLWTGWTSGNGAMVMIAVV, FIYGTLAALPLGLLYFLVIIP, QSMLLLCLSLAVLGFFIGIEV, MGALASTINIIVLDNPMTFHF, and FLDSALGQIVGCMLAFIVILL.

Belongs to the aromatic acid exporter ArAE (TC 2.A.85) family.

The protein resides in the cell inner membrane. Forms an efflux pump with AaeA. Could function as a metabolic relief valve, allowing to eliminate certain compounds when they accumulate to high levels in the cell. The polypeptide is p-hydroxybenzoic acid efflux pump subunit AaeB (Salmonella dublin (strain CT_02021853)).